Reading from the N-terminus, the 496-residue chain is Glutamyl-tRNA(Gln) amidotransferase subunit B, organellar chromatophore (496 aa).

This sequence belongs to the GatB/GatE family. GatB subfamily. In terms of assembly, subunit of the heterotrimeric GatCAB amidotransferase (AdT) complex, composed of A, B and C subunits.

It localises to the plastid. The protein resides in the organellar chromatophore. The enzyme catalyses L-glutamyl-tRNA(Gln) + L-glutamine + ATP + H2O = L-glutaminyl-tRNA(Gln) + L-glutamate + ADP + phosphate + H(+). Allows the formation of correctly charged Gln-tRNA(Gln) through the transamidation of misacylated Glu-tRNA(Gln). The reaction takes place in the presence of glutamine and ATP through an activated gamma-phospho-Glu-tRNA(Gln). The chain is Glutamyl-tRNA(Gln) amidotransferase subunit B, organellar chromatophore from Paulinella chromatophora.